We begin with the raw amino-acid sequence, 212 residues long: F420-dependent NADP reductase (212 aa).

NADP(+)-binding positions include 9-12 (TGNL), 31-32 (SR), K36, I72, H76, V98, and A137. L207 contacts coenzyme F420-(gamma-Glu)n.

This sequence belongs to the F420-dependent NADP reductase family. As to quaternary structure, homodimer.

It catalyses the reaction reduced coenzyme F420-(gamma-L-Glu)(n) + NADP(+) = oxidized coenzyme F420-(gamma-L-Glu)(n) + NADPH + 2 H(+). In terms of biological role, catalyzes the reversible reduction of NADP(+) by F420H(2). In this reaction the proS hydrogen at C5 of F420 is transferred into the proS position at C4 of NADPH. The sequence is that of F420-dependent NADP reductase (fno) from Archaeoglobus fulgidus (strain ATCC 49558 / DSM 4304 / JCM 9628 / NBRC 100126 / VC-16).